A 218-amino-acid polypeptide reads, in one-letter code: Histidine biosynthesis bifunctional protein HisIE (218 aa).

The interval 1 to 131 is phosphoribosyl-AMP cyclohydrolase; sequence MAPHQFKSKG…GDYDLPPADT (131 aa). The phosphoribosyl-ATP pyrophosphohydrolase stretch occupies residues 132–218; it reads LSQVFRVVEE…VYRALQQRRR (87 aa).

It in the N-terminal section; belongs to the PRA-CH family. In the C-terminal section; belongs to the PRA-PH family.

The protein localises to the cytoplasm. The catalysed reaction is 1-(5-phospho-beta-D-ribosyl)-ATP + H2O = 1-(5-phospho-beta-D-ribosyl)-5'-AMP + diphosphate + H(+). It carries out the reaction 1-(5-phospho-beta-D-ribosyl)-5'-AMP + H2O = 1-(5-phospho-beta-D-ribosyl)-5-[(5-phospho-beta-D-ribosylamino)methylideneamino]imidazole-4-carboxamide. Its pathway is amino-acid biosynthesis; L-histidine biosynthesis; L-histidine from 5-phospho-alpha-D-ribose 1-diphosphate: step 2/9. It participates in amino-acid biosynthesis; L-histidine biosynthesis; L-histidine from 5-phospho-alpha-D-ribose 1-diphosphate: step 3/9. This Gloeobacter violaceus (strain ATCC 29082 / PCC 7421) protein is Histidine biosynthesis bifunctional protein HisIE.